A 1168-amino-acid polypeptide reads, in one-letter code: DNA-directed RNA polymerase subunit beta (1168 aa).

This sequence belongs to the RNA polymerase beta chain family. As to quaternary structure, the RNAP catalytic core consists of 2 alpha, 1 beta, 1 beta' and 1 omega subunit. When a sigma factor is associated with the core the holoenzyme is formed, which can initiate transcription.

The enzyme catalyses RNA(n) + a ribonucleoside 5'-triphosphate = RNA(n+1) + diphosphate. Functionally, DNA-dependent RNA polymerase catalyzes the transcription of DNA into RNA using the four ribonucleoside triphosphates as substrates. The chain is DNA-directed RNA polymerase subunit beta from Rhodococcus jostii (strain RHA1).